The primary structure comprises 470 residues: MKTIAIIGKPNVGKSSLFNRLAKERIAITSDVSGTTRDIKKQVIEIEGNEVLLVDTGGIELKETGLFGKVRELALRAAKEADVVLYMVDGKMRPQDDDISLFRALHRENEHLFLVVNKIDNDKEKERGWEFAEFGAEKLLFISVSHNRGVGALQREIADVLGLEAPQEIVLSEDDEEDLEEYLVSLEEEEIEEIEEAPSEIRVGIIGKVNVGKSSLLNALLGSERSVVSDVAGTTIDPVDESMEIEGQKVLFVDTAGIRRRGKIEGIEKYALDRTQKALEKADIALLVLDCSLPFADLDEKIGGLVDKFSLGVIVVLNKWDIRSREFKEVEKEVRHRFKYLEHAPLVTVSAQNGRHIDMLKEKILKVYENFSRRIPTSILNKTIMEASARHPLPSDHGKIVRIYYATQYGVCPPQISLVMNRPNSLHFSYKRYVVNFLRDRFDFEGSPILIRARKRGEKLQDEIEALGED.

EngA-type G domains lie at 2-165 (KTIA…GLEA) and 201-372 (IRVG…ENFS). GTP contacts are provided by residues 8 to 15 (GKPNVGKS), 55 to 59 (DTGGI), 117 to 120 (NKID), 207 to 214 (GKVNVGKS), 254 to 258 (DTAGI), and 318 to 321 (NKWD). A KH-like domain is found at 373-457 (RRIPTSILNK…PILIRARKRG (85 aa)).

The protein belongs to the TRAFAC class TrmE-Era-EngA-EngB-Septin-like GTPase superfamily. EngA (Der) GTPase family. Associates with the 50S ribosomal subunit.

Functionally, GTPase that plays an essential role in the late steps of ribosome biogenesis. The chain is GTPase Der from Wolinella succinogenes (strain ATCC 29543 / DSM 1740 / CCUG 13145 / JCM 31913 / LMG 7466 / NCTC 11488 / FDC 602W) (Vibrio succinogenes).